A 115-amino-acid chain; its full sequence is Cytochrome c (115 aa).

Cys26, Cys29, His30, and Met91 together coordinate heme c.

Belongs to the cytochrome c family. In terms of processing, binds 1 heme c group covalently per subunit.

It localises to the mitochondrion intermembrane space. In terms of biological role, electron carrier protein. The oxidized form of the cytochrome c heme group can accept an electron from the heme group of the cytochrome c1 subunit of cytochrome reductase. Cytochrome c then transfers this electron to the cytochrome oxidase complex, the final protein carrier in the mitochondrial electron-transport chain. This is Cytochrome c from Theileria annulata.